The chain runs to 162 residues: UPF0262 protein AZC_3148 (162 aa).

It belongs to the UPF0262 family.

The protein is UPF0262 protein AZC_3148 of Azorhizobium caulinodans (strain ATCC 43989 / DSM 5975 / JCM 20966 / LMG 6465 / NBRC 14845 / NCIMB 13405 / ORS 571).